Here is a 275-residue protein sequence, read N- to C-terminus: Large ribosomal subunit protein uL2 (275 aa).

Disordered stretches follow at residues 1–20 (MAVK…TTAD) and 214–275 (WLGR…TRRK). A compositionally biased stretch (basic residues) spans 255-275 (KGLKTRRKRKTSDRFIVTRRK).

Belongs to the universal ribosomal protein uL2 family. Part of the 50S ribosomal subunit. Forms a bridge to the 30S subunit in the 70S ribosome.

One of the primary rRNA binding proteins. Required for association of the 30S and 50S subunits to form the 70S ribosome, for tRNA binding and peptide bond formation. It has been suggested to have peptidyltransferase activity; this is somewhat controversial. Makes several contacts with the 16S rRNA in the 70S ribosome. The polypeptide is Large ribosomal subunit protein uL2 (rplB) (Deinococcus radiodurans (strain ATCC 13939 / DSM 20539 / JCM 16871 / CCUG 27074 / LMG 4051 / NBRC 15346 / NCIMB 9279 / VKM B-1422 / R1)).